A 455-amino-acid polypeptide reads, in one-letter code: UDP-glycosyltransferase 87A2 (455 aa).

Methionine 1 is modified (N-acetylmethionine). UDP-alpha-D-glucose contacts are provided by residues serine 278, cysteine 327 to glutamine 329, histidine 344 to glutamate 352, and phenylalanine 366 to glutamine 369.

This sequence belongs to the UDP-glycosyltransferase family.

In Arabidopsis thaliana (Mouse-ear cress), this protein is UDP-glycosyltransferase 87A2 (UGT87A2).